A 459-amino-acid chain; its full sequence is Chromosomal replication initiator protein DnaA (459 aa).

Residues 1–74 (MQKIETFWYF…DEMAQGHFNE (74 aa)) form a domain I, interacts with DnaA modulators region. The tract at residues 74 to 122 (EKIHFKLELKDPAEIKTATIKAPEPKSKEDKKPPTDKAHGTTARKTNPS) is domain II. A disordered region spans residues 91-123 (ATIKAPEPKSKEDKKPPTDKAHGTTARKTNPSR). Residues 96–112 (PEPKSKEDKKPPTDKAH) are compositionally biased toward basic and acidic residues. The domain III, AAA+ region stretch occupies residues 123–339 (RLNPAFTFDA…GALKRVLAYS (217 aa)). The ATP site is built by glycine 167, glycine 169, lysine 170, and threonine 171. The tract at residues 340-459 (RFTGHPISLD…YSTLIHILRG (120 aa)) is domain IV, binds dsDNA.

The protein belongs to the DnaA family. In terms of assembly, oligomerizes as a right-handed, spiral filament on DNA at oriC.

Its subcellular location is the cytoplasm. In terms of biological role, plays an essential role in the initiation and regulation of chromosomal replication. ATP-DnaA binds to the origin of replication (oriC) to initiate formation of the DNA replication initiation complex once per cell cycle. Binds the DnaA box (a 9 base pair repeat at the origin) and separates the double-stranded (ds)DNA. Forms a right-handed helical filament on oriC DNA; dsDNA binds to the exterior of the filament while single-stranded (ss)DNA is stabiized in the filament's interior. The ATP-DnaA-oriC complex binds and stabilizes one strand of the AT-rich DNA unwinding element (DUE), permitting loading of DNA polymerase. After initiation quickly degrades to an ADP-DnaA complex that is not apt for DNA replication. Binds acidic phospholipids. The protein is Chromosomal replication initiator protein DnaA of Nitrosomonas eutropha (strain DSM 101675 / C91 / Nm57).